The following is a 162-amino-acid chain: Cytochrome c-type biogenesis protein CcmE (162 aa).

At 1-7 (MTRKQRR) the chain is on the cytoplasmic side. Residues 8 to 28 (LTMIGGALVVLGIAAALVLNA) traverse the membrane as a helical; Signal-anchor for type II membrane protein segment. Residues 29 to 162 (LRDSIVFFST…EASSKQEVSQ (134 aa)) lie on the Periplasmic side of the membrane. 2 residues coordinate heme: histidine 122 and tyrosine 126. The interval 140 to 162 (HWKDDYGAQPGAAEASSKQEVSQ) is disordered.

The protein belongs to the CcmE/CycJ family.

The protein resides in the cell inner membrane. Functionally, heme chaperone required for the biogenesis of c-type cytochromes. Transiently binds heme delivered by CcmC and transfers the heme to apo-cytochromes in a process facilitated by CcmF and CcmH. The sequence is that of Cytochrome c-type biogenesis protein CcmE from Nitrobacter winogradskyi (strain ATCC 25391 / DSM 10237 / CIP 104748 / NCIMB 11846 / Nb-255).